Consider the following 150-residue polypeptide: UPF0756 membrane protein CGSHiEE_06715 (150 aa).

The next 4 helical transmembrane spans lie at 1–21 (MTLQLNTIALLLVILLILGVL), 52–72 (YGVKIGIIILTIGVLSPLVSG), 81–101 (GFVSWKMALSISVGVLVAWLA), and 123–143 (IIGVAFLGGIPVGPLIAAGIL).

This sequence belongs to the UPF0756 family.

The protein localises to the cell membrane. This chain is UPF0756 membrane protein CGSHiEE_06715, found in Haemophilus influenzae (strain PittEE).